We begin with the raw amino-acid sequence, 427 residues long: Glutamyl-tRNA reductase (427 aa).

Substrate is bound by residues 48–51, Ser-99, 104–106, and Gln-110; these read TCNR and EDQ. The Nucleophile role is filled by Cys-49. 179–184 serves as a coordination point for NADP(+); sequence GAGEMG.

This sequence belongs to the glutamyl-tRNA reductase family. As to quaternary structure, homodimer.

The catalysed reaction is (S)-4-amino-5-oxopentanoate + tRNA(Glu) + NADP(+) = L-glutamyl-tRNA(Glu) + NADPH + H(+). The protein operates within porphyrin-containing compound metabolism; protoporphyrin-IX biosynthesis; 5-aminolevulinate from L-glutamyl-tRNA(Glu): step 1/2. Its function is as follows. Catalyzes the NADPH-dependent reduction of glutamyl-tRNA(Glu) to glutamate 1-semialdehyde (GSA). The sequence is that of Glutamyl-tRNA reductase from Methanocella arvoryzae (strain DSM 22066 / NBRC 105507 / MRE50).